A 358-amino-acid polypeptide reads, in one-letter code: UDP-N-acetylglucosamine--N-acetylmuramyl-(pentapeptide) pyrophosphoryl-undecaprenol N-acetylglucosamine transferase (358 aa).

UDP-N-acetyl-alpha-D-glucosamine contacts are provided by residues 11 to 13, N120, R161, S188, and Q282; that span reads TGG.

The protein belongs to the glycosyltransferase 28 family. MurG subfamily.

It is found in the cell inner membrane. The catalysed reaction is di-trans,octa-cis-undecaprenyl diphospho-N-acetyl-alpha-D-muramoyl-L-alanyl-D-glutamyl-meso-2,6-diaminopimeloyl-D-alanyl-D-alanine + UDP-N-acetyl-alpha-D-glucosamine = di-trans,octa-cis-undecaprenyl diphospho-[N-acetyl-alpha-D-glucosaminyl-(1-&gt;4)]-N-acetyl-alpha-D-muramoyl-L-alanyl-D-glutamyl-meso-2,6-diaminopimeloyl-D-alanyl-D-alanine + UDP + H(+). It participates in cell wall biogenesis; peptidoglycan biosynthesis. In terms of biological role, cell wall formation. Catalyzes the transfer of a GlcNAc subunit on undecaprenyl-pyrophosphoryl-MurNAc-pentapeptide (lipid intermediate I) to form undecaprenyl-pyrophosphoryl-MurNAc-(pentapeptide)GlcNAc (lipid intermediate II). The chain is UDP-N-acetylglucosamine--N-acetylmuramyl-(pentapeptide) pyrophosphoryl-undecaprenol N-acetylglucosamine transferase from Synechococcus sp. (strain CC9605).